Consider the following 3120-residue polypeptide: MNIFFQRKLVKYFGNIKKKKHYLTVSEECNHYVFVKKTYVSSVFLKSLNKVNKTCNTNSGILYNQYSLGYINMHKQLPSLIRNKSKTIGNYGVAHPSRLVKCLVTKNATAPFFNFTFDKGRLKNLVSWTLENYGQYKTVELLEQLKKTGFEYATKAGISLGLDDLKIPPKKKILLLEAEQLTKLTIHQYQRGDITAVERFQRLIDTWHRTSEQLKQEVINYFEETDILNPVYMMAFSGARGNISQVRQLVGMRGLMSDPQGQIIDFPIQSNFREGLTLTEYIISSYGARKGIVDTALRTANAGYLTRRLVDVAQHVIISHYDCGTHKGIFLTDMKEGNKTIVSAQSRIIGRVLARDIYKPNSTITIAKRNQEISTDVAFEIGKVTNRIFVRSALTCNTTKLLCQLCYGWSLAQGNLVSVGEAVGVIAAQSIGEPGTQLTMRTFHTGGVFSGDVSDEIRAPYNGFVYYDNKIPGILIRTLDGKILFLTKSEGTLIFTADPNFNKPQALTDSFLNSGHGEKEKYEIKKYKIPAYTLLFIRNGESVLQKQVLAQITMISTKPNMRDTAELVIKAELEGLFYAKNLQVQKKILGPKPKFIGEGKQNVLLDPKAMEIIVKARGWNFAWVLSGKRYEFPLLLKSFASSGDLITPNTIMAKHNLQLSSPFLNVGTALQVGNSTDIPKLPLLGATSKFRAMSGVLTSSIVRRYPTKINSSSRPKVNQFGKSNLFYTQVLQNKVNALNGEVDSYSETAKLPYWKNLNLKFVQKLNLSKFFKQYNLKNKTKTKLAFYSLVQANALQASKLDSFKANTFQSKQLGRPIFIYRHCLLTKESNKKTVKLIHNIQLQQSVLFLKIKKIKFYKMGYFQLVNSNKTAFLVSLSHNKNRLTLYHNKFNYNNSYNDIIVLPTSLTQDISSKKQIALKRFKPAYNLFQWFYPSLIKPSSKEAQNLTVQQVEFFNAREQMHFNSRYSKTDFVQLLQNPFKLDFNKALHRPLCISESYKEIPTGEVSISPQNSVNLPMNTFFNTDGVPDKKPNYTNMYAFWLKQQVLKSYKKRYKKYKLTSILKSHLSDKIYLPASVELQHQSQQNNLLSLTKEFKALNSSKYLKNNQLQSRPLLYKQEKLLKTLVLKKWFKSNLLYVNSAISKEENMDGSSTQMSAHSLPKRQRKGAKVSKINRFLKIDNYIKQLTYFKTSKIMRIKHSFNSLRVDFKFTSSKLVCPKRKRNLQIVCTLRGEEQTSVRESSVTHVNNLICSSKYKRSIRLQNDSHLFTTTKKAKVPFTGYSDSHQAGKVLQSSQISSTKPKTQSSFTFFEYFKLKLAQSGTKAILKHFKSLKAVNISKVSMDQSRNKGFNNWGKSSSECLNTSLGDKQALYFKTKTEANLQLLTLVLENFYRKKQFANLLAKNLTILNKNLKLKKNHVHFLLYYYNKLSVQKPNAIFLLTHMLAKANKIQISYSYVVPTSPKSKLNLDRGNLTTTNQKNVASLGGYQPRSAGTKYYSEGIRNRTRKNNKSSMTKITKIFNQLKLDTQFVIILLSPHKLLHHSHQLPQNTLGIYDKFNSNFEMAKVTLLTHPLWFNQFQMKSIKEVGNKFINTRNNSLLENYVILLLSNNYVFNFLSIKSEQINLPEEQESNLSLQEYKSPANCQEKALPSDNKKIIFDLKKLQHIVLTEQYKNNLRWVKNKKPRFLPKDIDINTLEVNLDRIKPKNKLSNLNPTQQLQLSNSLLEFVKTIKINPTDLAKVYSGSANTVMSIENCQPSLEVSNTFFLKTQKLLKLINKTKHSIALNQTKFINTSLLKGHLVAYARPVFIITNKAEPFIAKQKKDLLLLPKNATINVLIKPQQEKNSLNKAIFPLGGNAANNHSIFVSPNTNKLANPNVSYLKKHIYFNQMPFFDSPFRNASYLFSYTENSIKPLTKVDFMHSFAQKNHKLLPESEREKRLQFKALHIPKQPCLNICFKSNSNLIFNSKTTNSLVIRKTTTNYKYNIDLSEGVDFKKLKTNMFSARKCNNFKLDTALESKLFKGRPTLLNYKNVVTQTNYFSPFEGELLATKTYKNYLDLNPYQSLKVGLMQLNTSSALATLVPKTKRAGNKSSKQKIKLNQGELSTELGSTIPQSGKHKTKTEKMRMAMFKYYLKTINSQKIIGNKGWSRFNLILTKKDFITLKYNNTLYPNFTIFSEIQKHWQPRIQMTKPIRPISYDEVCLNYLFSEEITNQVKLQTLAKLNKEIHFNKSYHFNLKNRWLKQKLVINASTSKSTSSLLTNIHMDQGEDKKTSVGVSLKLPAIYLCEEEGLHTNLFIHKAQRLLYKIKIILSEKALNVEHYSWNKNSSLQKTFGYQNGIIQAKSLLHTLPTNLNYNLKWINYKQKNIFTTNKVGFFFLKGNTFFNTSQKLFNKKITKQTTFLNATIYNFGRNNKNNLISYNNSNFLENTHFVDLSLCLELQKIYLNKNYLNLKPILDKTIHCQKPTKVLFKKSGFSKKQHYYLEFLNTKNHRRLIGLKEFNDYHMSYSKSQTKEMSNFIDSYYFVKPINMDCAHYIKHELVLYNDLITHFASLNLYISREHGLKSLSAFFINILKIFITSNQSQISLAPIGIDKYTNIYIPEGEGEKDMTKNVFQVIKKSGQLIQMNKEKMTLRLGQPLVISPRSTIHATHGDFIRYKTPVVTLTYQQLKTGDIVQGIPKIEQLFEARTTKRGRLFRDNVTNLLTGLFLKYFIKSTYLLRKTMIGFSKKRWKKSIKYTLPVNKQPNMPRVNHTLNTTVGTELGRQSKTKVDKNKHSIAINKNLNYSNFINNKQNQTIILALALQWAVKQSFYKIQQIIVDGILRVYRSQGVSIADKHVEIVVKQMTSKVRIINSNASKMSEYMFSLDTIKAGEMPETDLPEEEVSLQQNKAVSKQNVVAQTGKKRKKRLRKSKLSERDVITTKRTEGIDSSKIPSSNIPEGKVTQNNKRKSTRKNVSLADRELKTRNTLSNTTKPIQISQVFEHKVLNQLLSNNLDGPTGLFPGEIVDIDFVENINTFLLKTASVDRASRETLSTDPLNPNNQVAFAIEPIKYEPIVLGITRASLEVESFLSAASFQQTTRVLSQAALYKKKDFLKGLKENIIIGNLIPAGTGFLSSLNI.

Residues Cys-323, Cys-396, Cys-403, and Cys-406 each coordinate Zn(2+). The interval 595–1130 (FIGEGKQNVL…LKTLVLKKWF (536 aa)) is insert-1. An insert-2 region spans residues 1796 to 2346 (KGHLVAYARP…NGIIQAKSLL (551 aa)). Residues 2422-2610 (NSNFLENTHF…PEGEGEKDMT (189 aa)) are insert-3. The interval 2726–2801 (FSKKRWKKSI…KQNQTIILAL (76 aa)) is insert-4. An insert-5 region spans residues 2856 to 2996 (ASKMSEYMFS…LNQLLSNNLD (141 aa)). The interval 2926-2956 (EGIDSSKIPSSNIPEGKVTQNNKRKSTRKNV) is disordered. Polar residues predominate over residues 2932–2946 (KIPSSNIPEGKVTQN).

Belongs to the RNA polymerase beta' chain family. RpoC2 subfamily. In plastids the minimal PEP RNA polymerase catalytic core is composed of four subunits: alpha, beta, beta', and beta''. When a (nuclear-encoded) sigma factor is associated with the core the holoenzyme is formed, which can initiate transcription. Zn(2+) is required as a cofactor.

The protein localises to the plastid. The protein resides in the chloroplast. It catalyses the reaction RNA(n) + a ribonucleoside 5'-triphosphate = RNA(n+1) + diphosphate. Functionally, DNA-dependent RNA polymerase catalyzes the transcription of DNA into RNA using the four ribonucleoside triphosphates as substrates. This is DNA-directed RNA polymerase subunit beta'' from Chlamydomonas reinhardtii (Chlamydomonas smithii).